An 853-amino-acid polypeptide reads, in one-letter code: Guanine nucleotide exchange protein smcr8a (853 aa).

The 173-residue stretch at 47–219 (TSYAKFSKDF…KETELQKMNN (173 aa)) folds into the uDENN FLCN/SMCR8-type domain. 2 disordered regions span residues 272–298 (PVMDETLKDTNPSDSAENTVETESRKS) and 418–454 (LKPGVESGEGPPESSTSDITQETSEAADTETKGSFSS). Polar residues predominate over residues 280–298 (DTNPSDSAENTVETESRKS). The 438-residue stretch at 316-753 (RLKTLEELCD…LISHLADHRT (438 aa)) folds into the cDENN FLCN/SMCR8-type domain. Positions 421–432 (GVESGEGPPESS) are enriched in low complexity. Residues 433–454 (TSDITQETSEAADTETKGSFSS) show a composition bias toward polar residues. Positions 762-826 (FLHIQGMLTQ…IIQYLSELIK (65 aa)) constitute a dDENN FLCN/SMCR8-type domain.

Belongs to the SMCR8 family. As to quaternary structure, component of the C9orf72-SMCR8 complex. The C9orf72-SMCR8 complex associates with the ATG1/ULK1 kinase complex.

The protein localises to the cytoplasm. Its subcellular location is the nucleus. In terms of biological role, component of the C9orf72-SMCR8 complex, a complex that has guanine nucleotide exchange factor (GEF) activity and regulates autophagy. In the complex, C9orf72 and SMCR8 probably constitute the catalytic subunits that promote the exchange of GDP to GTP, converting inactive GDP-bound RAB8A and RAB39B into their active GTP-bound form, thereby promoting autophagosome maturation. The C9orf72-SMCR8 complex also acts as a negative regulator of autophagy initiation by interacting with the ATG1/ULK1 kinase complex and inhibiting its protein kinase activity. The chain is Guanine nucleotide exchange protein smcr8a (smcr8a) from Danio rerio (Zebrafish).